Here is a 276-residue protein sequence, read N- to C-terminus: Mitochondrial outer membrane protein porin of 34 kDa (276 aa).

This sequence belongs to the eukaryotic mitochondrial porin (TC 1.B.8.1) family.

It is found in the mitochondrion outer membrane. Forms a channel through the cell membrane that allows diffusion of small hydrophilic molecules. The channel adopts an open conformation at low or zero membrane potential and a closed conformation at potentials above 30-40 mV. The open state has a weak anion selectivity whereas the closed state is cation-selective. This Solanum tuberosum (Potato) protein is Mitochondrial outer membrane protein porin of 34 kDa.